The following is a 209-amino-acid chain: Mitotic spindle checkpoint protein MAD2 (209 aa).

An HORMA domain is found at 15-198 (HGSAAIVSEF…TKIHKVDTLV (184 aa)).

This sequence belongs to the MAD2 family. As to quaternary structure, part of the mitotic checkpoint complex (MCC); interacts with MAD1, CDC20-1, CDC20-2 and CDC20-5. Interacts with BUBR1 at chromocenters and with BUB3.1. Interacts with EIF4B3. In terms of tissue distribution, expressed in actively dividing tissues, early in organ development, in young leaves, lateral root primordia and root meristems.

It is found in the nucleus. The protein localises to the nucleus envelope. Its subcellular location is the chromosome. It localises to the centromere. The protein resides in the kinetochore. It is found in the cytoplasm. The protein localises to the cytoskeleton. Its subcellular location is the spindle. Required for the execution of the mitotic checkpoint which monitors the process of kinetochore-spindle attachment and delays the onset of anaphase when this process is not complete. It inhibits the activity of the anaphase promoting complex by sequestering CDC20 until all chromosomes are aligned at the metaphase plate. The chain is Mitotic spindle checkpoint protein MAD2 from Arabidopsis thaliana (Mouse-ear cress).